Here is an 82-residue protein sequence, read N- to C-terminus: Exodeoxyribonuclease 7 small subunit (82 aa).

This sequence belongs to the XseB family. Heterooligomer composed of large and small subunits.

Its subcellular location is the cytoplasm. It carries out the reaction Exonucleolytic cleavage in either 5'- to 3'- or 3'- to 5'-direction to yield nucleoside 5'-phosphates.. Its function is as follows. Bidirectionally degrades single-stranded DNA into large acid-insoluble oligonucleotides, which are then degraded further into small acid-soluble oligonucleotides. This is Exodeoxyribonuclease 7 small subunit from Pectobacterium atrosepticum (strain SCRI 1043 / ATCC BAA-672) (Erwinia carotovora subsp. atroseptica).